The primary structure comprises 283 residues: Heavy metal-associated isoprenylated plant protein 3 (283 aa).

The segment covering 1 to 22 (MGEKKNEGDNKKKGGDNKKKNE) has biased composition (basic and acidic residues). The segment at 1–26 (MGEKKNEGDNKKKGGDNKKKNETPSI) is disordered. HMA domains follow at residues 25–88 (SITV…KKKV) and 132–195 (VTTA…KRAV). 2 residues coordinate Zn(2+): C36 and C39. The segment covering 82 to 129 (EKTKKKVDLVSPQPKKEKEKENKNKNDEDKKKSEEKKKPDNNDKKPKE) has biased composition (basic and acidic residues). Positions 82-131 (EKTKKKVDLVSPQPKKEKEKENKNKNDEDKKKSEEKKKPDNNDKKPKETP) are disordered. C143 and C146 together coordinate Zn(2+). The segment covering 198–230 (VPPKKEKDKENGNENGEKKKGGGGDGGGKEKTG) has biased composition (basic and acidic residues). Residues 198 to 238 (VPPKKEKDKENGNENGEKKKGGGGDGGGKEKTGNKGGGEGV) are disordered. At C280 the chain carries Cysteine methyl ester. C280 carries S-farnesyl cysteine lipidation. The propeptide at 281-283 (VVM) is removed in mature form.

This sequence belongs to the HIPP family.

The protein localises to the nucleus. Its subcellular location is the nucleolus. It is found in the cytoplasm. Functionally, heavy-metal-binding protein. Binds high amounts of zinc. May act as an upstream regulator of the salicylate-dependent pathogen response. Involved in abiotic stress responses, and seed and flower development. The protein is Heavy metal-associated isoprenylated plant protein 3 of Arabidopsis thaliana (Mouse-ear cress).